Reading from the N-terminus, the 199-residue chain is Recombination protein RecR (199 aa).

A C4-type zinc finger spans residues 58 to 73 (CARCGNITSADLCDIC). The Toprim domain occupies 81–176 (GELCVVEDVA…QVTSLAQGVP (96 aa)).

This sequence belongs to the RecR family.

In terms of biological role, may play a role in DNA repair. It seems to be involved in an RecBC-independent recombinational process of DNA repair. It may act with RecF and RecO. The chain is Recombination protein RecR from Cereibacter sphaeroides (strain ATCC 17025 / ATH 2.4.3) (Rhodobacter sphaeroides).